A 278-amino-acid chain; its full sequence is MINEILDKVGRLLEEVRTKKPLVHSITNYITATDCANVILAVGGSPTMADYVKEVEEIASISSAVVLNMGVISEKMVEAMILAGKSANKNNVPVIFDPVGAGVANFRNKSAEKILSEVKVDIIRGNISEIKFICGLRSETKGVDASERDMNMGNDKKVIVAQELAKKLNCVVAITGVDDIISDGKRNVILSNGHKMLANVTGTGCMSSALCGAFAGASDDYFIAAICAVLTMSISGEIAYEKSKGIGMGTFHISLIDAISMMNENVIKEKARVTTINR.

Met48 provides a ligand contact to substrate. Residues Arg124 and Thr175 each contribute to the ATP site. Residue Gly202 participates in substrate binding.

It belongs to the Thz kinase family. Requires Mg(2+) as cofactor.

The catalysed reaction is 5-(2-hydroxyethyl)-4-methylthiazole + ATP = 4-methyl-5-(2-phosphooxyethyl)-thiazole + ADP + H(+). The protein operates within cofactor biosynthesis; thiamine diphosphate biosynthesis; 4-methyl-5-(2-phosphoethyl)-thiazole from 5-(2-hydroxyethyl)-4-methylthiazole: step 1/1. Functionally, catalyzes the phosphorylation of the hydroxyl group of 4-methyl-5-beta-hydroxyethylthiazole (THZ). This chain is Hydroxyethylthiazole kinase, found in Clostridium botulinum (strain Alaska E43 / Type E3).